The following is a 416-amino-acid chain: MLSSYNTLETVDPDLWQAIKGEMQRQEEYIELIASENYASPAVMQAQGSVLTNKYAEGYPGKRYYGGCEYVDVVEQLAIDRVRALFDAEYVNVQPHSGSQANAAVYLTALKPGDTLLGMSLAHGGHLTHGASVNLSGKIFNAVSYGLRSDTEELDYDEVARLAHEHKPKLIVAGASAYSLVIDWKRFRKIADDIGAYLFVDMAHYAGLVAAGYYPNPVGIADFVTSTTHKTLRGPRGGIIMARAEHEKALNSAIFPQTQGGPLMHVIAAKAVAFKEAASQEFKDYQEQVIDNARVMAKVLQERGLRIVSGRTDCHMFLVDLRPKYITGKQAAESLEVAHITVNKNAIPNDPQKPFVTSGIRIGSPAITTRGFAEFESEQLAHLIADVLEAPTDSSVLTEVARQAKALCAKFPVYQG.

(6S)-5,6,7,8-tetrahydrofolate is bound by residues Leu-121 and 125-127; that span reads GHL. Lys-230 carries the post-translational modification N6-(pyridoxal phosphate)lysine.

The protein belongs to the SHMT family. As to quaternary structure, homodimer. Pyridoxal 5'-phosphate is required as a cofactor.

The protein resides in the cytoplasm. The catalysed reaction is (6R)-5,10-methylene-5,6,7,8-tetrahydrofolate + glycine + H2O = (6S)-5,6,7,8-tetrahydrofolate + L-serine. It participates in one-carbon metabolism; tetrahydrofolate interconversion. It functions in the pathway amino-acid biosynthesis; glycine biosynthesis; glycine from L-serine: step 1/1. Functionally, catalyzes the reversible interconversion of serine and glycine with tetrahydrofolate (THF) serving as the one-carbon carrier. This reaction serves as the major source of one-carbon groups required for the biosynthesis of purines, thymidylate, methionine, and other important biomolecules. Also exhibits THF-independent aldolase activity toward beta-hydroxyamino acids, producing glycine and aldehydes, via a retro-aldol mechanism. This is Serine hydroxymethyltransferase from Nitrosospira multiformis (strain ATCC 25196 / NCIMB 11849 / C 71).